The primary structure comprises 135 residues: Envelope glycoprotein N (135 aa).

The first 19 residues, 1 to 19, serve as a signal peptide directing secretion; sequence MEWNTLVLGLLVLSVVASS. Residues 20-98 are Virion surface-facing; that stretch reads NNTSTASTPR…SHMYELSLSS (79 aa). The segment covering 21-68 has biased composition (low complexity); that stretch reads NTSTASTPRPSSSTHASTTVKATTVATTSTTTATSTSSTTSAKPGSTT. The disordered stretch occupies residues 21–73; that stretch reads NTSTASTPRPSSSTHASTTVKATTVATTSTTTATSTSSTTSAKPGSTTHDPNV. A helical transmembrane segment spans residues 99 to 119; that stretch reads FAAWWTMLNALILMGAFCIVL. The Intravirion portion of the chain corresponds to 120–135; sequence RHCCFQNFTATTTKGY.

This sequence belongs to the herpesviridae glycoprotein N family. As to quaternary structure, interacts (via N-terminus) with gM (via N-terminus). The gM-gN heterodimer forms the gCII complex. O-glycosylated.

It localises to the virion membrane. The protein localises to the host membrane. It is found in the host Golgi apparatus. Its subcellular location is the host trans-Golgi network. In terms of biological role, envelope glycoprotein necessary for proper maturation of gM and modulation of its membrane fusion activity. Also plays a critical role in virion morphogenesis. This Homo sapiens (Human) protein is Envelope glycoprotein N.